The chain runs to 376 residues: Pyrimidine monooxygenase RutA (376 aa).

Residues 61–62 (IK), Asn-127, Glu-136, 152–153 (RY), and Ser-202 each bind FMN.

The protein belongs to the NtaA/SnaA/DszA monooxygenase family. RutA subfamily.

It catalyses the reaction uracil + FMNH2 + NADH + O2 = (Z)-3-ureidoacrylate + FMN + NAD(+) + H2O + H(+). The catalysed reaction is thymine + FMNH2 + NADH + O2 = (Z)-2-methylureidoacrylate + FMN + NAD(+) + H2O + H(+). In terms of biological role, catalyzes the pyrimidine ring opening between N-3 and C-4 by an unusual flavin hydroperoxide-catalyzed mechanism, adding oxygen atoms in the process to yield ureidoacrylate peracid, that immediately reacts with FMN forming ureidoacrylate and FMN-N(5)-oxide. The FMN-N(5)-oxide reacts spontaneously with NADH to produce FMN. Requires the flavin reductase RutF to regenerate FMN in vivo. The protein is Pyrimidine monooxygenase RutA of Methylorubrum populi (strain ATCC BAA-705 / NCIMB 13946 / BJ001) (Methylobacterium populi).